We begin with the raw amino-acid sequence, 189 residues long: MDAVDTTMEKLRAQCLSRGASGIQGVARFFRRLDQDGSRSLDVRELQRGLAELGLVLDTAEMEGVCRRWDRDGSGTLDLEEFLRALRPPMSQAREAVVTAAFAKLDRSGDGVVTVDDLRGVYSGRTHPKVRSGEWTEEQVLRHFLDNFDSSEKDGQVTLAEFQDYYSGVSASMDTDEEFVAMMTSAWRL.

4 consecutive EF-hand domains span residues 21–56 (SGIQ…LGLV), 57–92 (LDTA…PMSQ), 93–128 (AREA…RTHP), and 136–172 (TEEQ…VSAS). Ca(2+) is bound by residues D34, D36, S38, S40, E45, D70, D72, S74, T76, E81, D106, S108, D110, and D117. The residue at position 40 (S40) is a Phosphoserine; by PKA.

Monomer. Does not form oligomers in the presence of calcium.

It is found in the cytoplasm. In terms of biological role, calcium-binding protein. May play a role in cellular signaling events (Potential). In Bos taurus (Bovine), this protein is Calcyphosin (CAPS).